The sequence spans 342 residues: Olfactory receptor 51F2 (342 aa).

Residues methionine 1–tyrosine 39 are Extracellular-facing. N-linked (GlcNAc...) asparagine glycosylation occurs at asparagine 17. Residues tryptophan 40 to leucine 60 form a helical membrane-spanning segment. At phenylalanine 61–serine 68 the chain is on the cytoplasmic side. Residues leucine 69–leucine 89 traverse the membrane as a helical segment. Residues cysteine 90–alanine 113 lie on the Extracellular side of the membrane. Cysteine 111 and cysteine 203 are oxidised to a cystine. The chain crosses the membrane as a helical span at residues glutamine 114–phenylalanine 134. Over aspartate 135–alanine 153 the chain is Cytoplasmic. A helical membrane pass occupies residues arginine 154–methionine 174. Residues leucine 175–serine 210 are Extracellular-facing. A helical transmembrane segment spans residues isoleucine 211–serine 231. Topologically, residues tyrosine 232–alanine 251 are cytoplasmic. The helical transmembrane segment at phenylalanine 252–leucine 272 threads the bilayer. Over serine 273–histidine 287 the chain is Extracellular. The helical transmembrane segment at isoleucine 288–valine 308 threads the bilayer. Residues lysine 309 to glutamate 342 lie on the Cytoplasmic side of the membrane.

It belongs to the G-protein coupled receptor 1 family.

The protein resides in the cell membrane. Odorant receptor. In Homo sapiens (Human), this protein is Olfactory receptor 51F2 (OR51F2).